A 386-amino-acid chain; its full sequence is Succinyl-diaminopimelate desuccinylase (386 aa).

Zn(2+) is bound at residue His72. Asp74 is an active-site residue. Position 105 (Asp105) interacts with Zn(2+). The active-site Proton acceptor is the Glu139. Residues Glu140, Glu168, and His353 each coordinate Zn(2+).

The protein belongs to the peptidase M20A family. DapE subfamily. In terms of assembly, homodimer. Requires Zn(2+) as cofactor. Co(2+) is required as a cofactor.

It catalyses the reaction N-succinyl-(2S,6S)-2,6-diaminopimelate + H2O = (2S,6S)-2,6-diaminopimelate + succinate. It participates in amino-acid biosynthesis; L-lysine biosynthesis via DAP pathway; LL-2,6-diaminopimelate from (S)-tetrahydrodipicolinate (succinylase route): step 3/3. Catalyzes the hydrolysis of N-succinyl-L,L-diaminopimelic acid (SDAP), forming succinate and LL-2,6-diaminopimelate (DAP), an intermediate involved in the bacterial biosynthesis of lysine and meso-diaminopimelic acid, an essential component of bacterial cell walls. The protein is Succinyl-diaminopimelate desuccinylase of Rhodospirillum centenum (strain ATCC 51521 / SW).